We begin with the raw amino-acid sequence, 183 residues long: dCTP deaminase, dUMP-forming (183 aa).

DCTP is bound by residues 99 to 104 (KSSIAR), Asp117, 125 to 127 (TLE), Gln146, Tyr159, Lys166, and Gln170. Residue Glu127 is the Proton donor/acceptor of the active site.

The protein belongs to the dCTP deaminase family. Homotrimer.

It carries out the reaction dCTP + 2 H2O = dUMP + NH4(+) + diphosphate. It functions in the pathway pyrimidine metabolism; dUMP biosynthesis; dUMP from dCTP: step 1/1. In terms of biological role, bifunctional enzyme that catalyzes both the deamination of dCTP to dUTP and the hydrolysis of dUTP to dUMP without releasing the toxic dUTP intermediate. The protein is dCTP deaminase, dUMP-forming of Methanoregula boonei (strain DSM 21154 / JCM 14090 / 6A8).